An 85-amino-acid polypeptide reads, in one-letter code: Large ribosomal subunit protein bL27 (85 aa).

This sequence belongs to the bacterial ribosomal protein bL27 family.

The protein is Large ribosomal subunit protein bL27 of Ruthia magnifica subsp. Calyptogena magnifica.